A 238-amino-acid polypeptide reads, in one-letter code: tRNA (guanine-N(7)-)-methyltransferase (238 aa).

Over residues 1-12 the composition is skewed to polar residues; that stretch reads MTDTAENQTPND. Residues 1–20 are disordered; it reads MTDTAENQTPNDRQAGHPRS. Glu70, Asp95, Asp122, and Asp145 together coordinate S-adenosyl-L-methionine. Residue Asp145 is part of the active site. Residues Lys149, Asp181, and 216–219 contribute to the substrate site; that span reads TKFE.

Belongs to the class I-like SAM-binding methyltransferase superfamily. TrmB family.

The enzyme catalyses guanosine(46) in tRNA + S-adenosyl-L-methionine = N(7)-methylguanosine(46) in tRNA + S-adenosyl-L-homocysteine. It functions in the pathway tRNA modification; N(7)-methylguanine-tRNA biosynthesis. Functionally, catalyzes the formation of N(7)-methylguanine at position 46 (m7G46) in tRNA. The sequence is that of tRNA (guanine-N(7)-)-methyltransferase from Neisseria gonorrhoeae (strain NCCP11945).